A 613-amino-acid polypeptide reads, in one-letter code: Proline--tRNA ligase (613 aa).

This sequence belongs to the class-II aminoacyl-tRNA synthetase family. ProS type 1 subfamily. Homodimer.

The protein resides in the cytoplasm. It catalyses the reaction tRNA(Pro) + L-proline + ATP = L-prolyl-tRNA(Pro) + AMP + diphosphate. Catalyzes the attachment of proline to tRNA(Pro) in a two-step reaction: proline is first activated by ATP to form Pro-AMP and then transferred to the acceptor end of tRNA(Pro). As ProRS can inadvertently accommodate and process non-cognate amino acids such as alanine and cysteine, to avoid such errors it has two additional distinct editing activities against alanine. One activity is designated as 'pretransfer' editing and involves the tRNA(Pro)-independent hydrolysis of activated Ala-AMP. The other activity is designated 'posttransfer' editing and involves deacylation of mischarged Ala-tRNA(Pro). The misacylated Cys-tRNA(Pro) is not edited by ProRS. In Tropheryma whipplei (strain Twist) (Whipple's bacillus), this protein is Proline--tRNA ligase.